A 191-amino-acid polypeptide reads, in one-letter code: Ribosome maturation factor RimM (191 aa).

Residues 114–191 form the PRC barrel domain; that stretch reads EDEYYWVDLI…RIVVDWQPDY (78 aa).

The protein belongs to the RimM family. As to quaternary structure, binds ribosomal protein uS19.

The protein resides in the cytoplasm. Functionally, an accessory protein needed during the final step in the assembly of 30S ribosomal subunit, possibly for assembly of the head region. Essential for efficient processing of 16S rRNA. May be needed both before and after RbfA during the maturation of 16S rRNA. It has affinity for free ribosomal 30S subunits but not for 70S ribosomes. The chain is Ribosome maturation factor RimM from Paracidovorax citrulli (strain AAC00-1) (Acidovorax citrulli).